The following is a 335-amino-acid chain: Beta-ketoacyl-[acyl-carrier-protein] synthase III 2 (335 aa).

Catalysis depends on residues cysteine 116 and histidine 256. Residues 257–261 (QANVR) form an ACP-binding region. Asparagine 286 is an active-site residue.

Belongs to the thiolase-like superfamily. FabH family. As to quaternary structure, homodimer.

Its subcellular location is the cytoplasm. The enzyme catalyses malonyl-[ACP] + acetyl-CoA + H(+) = 3-oxobutanoyl-[ACP] + CO2 + CoA. It functions in the pathway lipid metabolism; fatty acid biosynthesis. Its function is as follows. Catalyzes the condensation reaction of fatty acid synthesis by the addition to an acyl acceptor of two carbons from malonyl-ACP. Catalyzes the first condensation reaction which initiates fatty acid synthesis and may therefore play a role in governing the total rate of fatty acid production. Possesses both acetoacetyl-ACP synthase and acetyl transacylase activities. Its substrate specificity determines the biosynthesis of branched-chain and/or straight-chain of fatty acids. In Bacteroides thetaiotaomicron (strain ATCC 29148 / DSM 2079 / JCM 5827 / CCUG 10774 / NCTC 10582 / VPI-5482 / E50), this protein is Beta-ketoacyl-[acyl-carrier-protein] synthase III 2.